The following is an 88-amino-acid chain: Small ribosomal subunit protein bS20 (88 aa).

A disordered region spans residues 1 to 26 (MANTAQARKRARQNTKRRQNSASQRS). Positions 7 to 19 (ARKRARQNTKRRQ) are enriched in basic residues.

It belongs to the bacterial ribosomal protein bS20 family.

Its function is as follows. Binds directly to 16S ribosomal RNA. The polypeptide is Small ribosomal subunit protein bS20 (Psychrobacter cryohalolentis (strain ATCC BAA-1226 / DSM 17306 / VKM B-2378 / K5)).